The chain runs to 369 residues: NADH-quinone oxidoreductase subunit H (369 aa).

Transmembrane regions (helical) follow at residues 20–40 (VLLI…AYLV), 88–108 (ICFL…WAVI), 133–153 (IGVL…IIAG), 179–199 (IGLT…GEIV), 205–225 (MPYW…ISSL), 267–287 (ILIN…PLNI), 293–313 (IPGI…FIWI), and 328–348 (LGWK…SGVL).

It belongs to the complex I subunit 1 family. In terms of assembly, NDH-1 is composed of 14 different subunits. Subunits NuoA, H, J, K, L, M, N constitute the membrane sector of the complex.

Its subcellular location is the cell inner membrane. The catalysed reaction is a quinone + NADH + 5 H(+)(in) = a quinol + NAD(+) + 4 H(+)(out). Its function is as follows. NDH-1 shuttles electrons from NADH, via FMN and iron-sulfur (Fe-S) centers, to quinones in the respiratory chain. The immediate electron acceptor for the enzyme in this species is believed to be ubiquinone. Couples the redox reaction to proton translocation (for every two electrons transferred, four hydrogen ions are translocated across the cytoplasmic membrane), and thus conserves the redox energy in a proton gradient. This subunit may bind ubiquinone. This is NADH-quinone oxidoreductase subunit H from Ehrlichia canis (strain Jake).